The following is a 284-amino-acid chain: NADPH-dependent 7-cyano-7-deazaguanine reductase (284 aa).

Residue 91-93 (IES) participates in substrate binding. 93 to 94 (SK) lines the NADPH pocket. Cys192 functions as the Thioimide intermediate in the catalytic mechanism. Catalysis depends on Asp199, which acts as the Proton donor. 231–232 (HE) is a substrate binding site. Residue 260–261 (RG) coordinates NADPH.

This sequence belongs to the GTP cyclohydrolase I family. QueF type 2 subfamily. Homodimer.

It is found in the cytoplasm. It carries out the reaction 7-aminomethyl-7-carbaguanine + 2 NADP(+) = 7-cyano-7-deazaguanine + 2 NADPH + 3 H(+). The protein operates within tRNA modification; tRNA-queuosine biosynthesis. In terms of biological role, catalyzes the NADPH-dependent reduction of 7-cyano-7-deazaguanine (preQ0) to 7-aminomethyl-7-deazaguanine (preQ1). The chain is NADPH-dependent 7-cyano-7-deazaguanine reductase from Shewanella denitrificans (strain OS217 / ATCC BAA-1090 / DSM 15013).